Here is a 554-residue protein sequence, read N- to C-terminus: Cytochrome c oxidase subunit 1-alpha (554 aa).

The chain crosses the membrane as a helical span at residues 26-56 (KDIGVLYLFTAGLAGLISVTLTVYMRMELQH). Cysteines 63 and 77 form a disulfide. 6 helical membrane passes run 81 to 118 (AHLW…LHIG), 127 to 148 (LNNL…SLLS), 175 to 203 (AMDL…TFLN), 215 to 248 (PLFA…DRNF), 260 to 295 (DPVL…STFA), and 301 to 319 (GYLP…GFIV). His-91 provides a ligand contact to Fe(II)-heme a. Cu cation contacts are provided by His-273 and Tyr-277. Residues 273–277 (HPEVY) constitute a cross-link (1'-histidyl-3'-tyrosine (His-Tyr)). Cu cation contacts are provided by His-322 and His-323. Helical transmembrane passes span 331 to 359 (LTQQ…IATM), 367 to 390 (KTPM…VIAQ), 399 to 425 (DTYY…GTYY), 436 to 463 (PEWA…FLGR), and 478 to 508 (SYWN…TLFA). Residue His-406 participates in heme a3 binding. His-408 contributes to the Fe(II)-heme a binding site.

The protein belongs to the heme-copper respiratory oxidase family. The cofactor is Cu(2+). Heme serves as cofactor.

The protein resides in the cell inner membrane. The enzyme catalyses 4 Fe(II)-[cytochrome c] + O2 + 8 H(+)(in) = 4 Fe(III)-[cytochrome c] + 2 H2O + 4 H(+)(out). Its pathway is energy metabolism; oxidative phosphorylation. In terms of biological role, subunit I and II form the functional core of the enzyme complex. Electrons originating in cytochrome c are transferred via heme a and Cu(A) to the binuclear center formed by heme a3 and Cu(B). This cytochrome c oxidase shows proton pump activity across the membrane in addition to the electron transfer. The polypeptide is Cytochrome c oxidase subunit 1-alpha (ctaDI) (Paracoccus denitrificans).